A 514-amino-acid chain; its full sequence is Nucleus accumbens-associated protein 1 (514 aa).

Residues 30–94 (CDVSVVVKGH…CYTGRLSMNM (65 aa)) enclose the BTB domain. A Glycyl lysine isopeptide (Lys-Gly) (interchain with G-Cter in SUMO1); alternate cross-link involves residue Lys167. Lys167 is covalently cross-linked (Glycyl lysine isopeptide (Lys-Gly) (interchain with G-Cter in SUMO2); alternate). Lys182 is covalently cross-linked (Glycyl lysine isopeptide (Lys-Gly) (interchain with G-Cter in SUMO2)). Disordered stretches follow at residues 183-205 (RLWDSSQKEAGGSGGNNGSRKMA) and 242-279 (PSMSERTSPGTSSAYTSDSPSSYHNEEDEEEDAGEEGT). Ser187 carries the post-translational modification Phosphoserine. Residues 242-251 (PSMSERTSPG) are compositionally biased toward polar residues. Ser245 bears the Phosphoserine; by PKC mark. Over residues 252-264 (TSSAYTSDSPSSY) the composition is skewed to low complexity. A compositionally biased stretch (acidic residues) spans 267 to 279 (EEDEEEDAGEEGT). Residues Lys304, Lys438, Lys466, and Lys485 each participate in a glycyl lysine isopeptide (Lys-Gly) (interchain with G-Cter in SUMO2) cross-link. The region spanning 360–457 (GTNVYITRAQ…DMCTNARRVV (98 aa)) is the BEN domain. Phosphoserine is present on residues Ser492 and Ser496.

Homooligomer; mediated by the BTB domain. Interacts with HDAC3 and HDAC4. Interacts (via BTB domain) with CUL3, PSMD7 and RCOR1. Ubiquitously expressed with higher expression in the brain, kidney and liver, and at lower levels in heart, lung and testes.

The protein resides in the nucleus. Its subcellular location is the cytoplasm. Functions as a transcriptional repressor. Seems to function as a transcriptional corepressor in neuronal cells through recruitment of HDAC3 and HDAC4. Contributes to tumor progression, and tumor cell proliferation and survival. This may be mediated at least in part through repressing transcriptional activity of GADD45GIP1. Required for recruiting the proteasome from the nucleus to the cytoplasm and dendritic spines. Involved in the acute behavioral and neurological responses to cocaine and amphetamines. The sequence is that of Nucleus accumbens-associated protein 1 (Nacc1) from Mus musculus (Mouse).